The primary structure comprises 358 residues: Protein ocs (358 aa).

It belongs to the lysopine/nopaline/octopine/opine/vitopine dehydrogenases family.

The catalysed reaction is D-octopine + NAD(+) + H2O = L-arginine + pyruvate + NADH + H(+). It catalyses the reaction D-lysopine + NADP(+) + H2O = L-lysine + pyruvate + NADPH + H(+). In terms of biological role, reductive condensation of pyruvate and arginine, lysine, histidine, or octopine to form octopine, lysopine, histopine, or octopinic acid, respectively. NADPH is the preferred cofactor, but NADH can also be used. The chain is Protein ocs (ocs) from Agrobacterium vitis (Rhizobium vitis).